The following is a 93-amino-acid chain: Small ribosomal subunit protein uS19c (93 aa).

The tract at residues 73 to 93 (EFSPTRTFRGHTKSDKKSRRP) is disordered. The span at 80 to 93 (FRGHTKSDKKSRRP) shows a compositional bias: basic residues.

Belongs to the universal ribosomal protein uS19 family.

It is found in the plastid. It localises to the chloroplast. Functionally, protein S19 forms a complex with S13 that binds strongly to the 16S ribosomal RNA. In Mesostigma viride (Green alga), this protein is Small ribosomal subunit protein uS19c (rps19).